Here is a 240-residue protein sequence, read N- to C-terminus: Pro-opiomelanocortin B (240 aa).

Positions 1 to 36 (MFGTFLQNQSVRLNMVCAPWLLAVVVVCVCNPGVEG) are cleaved as a signal peptide. Q37 carries the pyrrolidone carboxylic acid modification. Residue H111 is a propeptide. N-acetylserine; in Corticotropin is present on S112. I124 carries the post-translational modification Isoleucine amide.

The protein belongs to the POMC family. Post-translationally, specific enzymatic cleavages at paired basic residues yield the different active peptides. Acetylation of beta-endorphin occurs in a tissue-specific manner. Pituitary and hypothalamus of adult diploid animals.

The protein localises to the secreted. In terms of biological role, stimulates the adrenal glands to release cortisol. Its function is as follows. Melanocyte-stimulating hormone alpha: Anorexigenic peptide. Increases the pigmentation of skin by increasing melanin production in melanocytes. Functionally, melanocyte-stimulating hormone beta: Increases the pigmentation of skin by increasing melanin production in melanocytes. Beta-endorphin: Endogenous orexigenic opiate. In terms of biological role, endogenous opiate. The protein is Pro-opiomelanocortin B (pomcb) of Oncorhynchus mykiss (Rainbow trout).